The following is a 236-amino-acid chain: SPbeta prophage-derived uncharacterized lipoprotein YokB (236 aa).

A signal peptide spans 1–19 (MNIRFSMLVCVSFIFFTGG). A lipid anchor (N-palmitoyl cysteine) is attached at Cys20. The S-diacylglycerol cysteine moiety is linked to residue Cys20. 2 disordered regions span residues 23–59 (SSAN…TPNM) and 204–236 (VKKV…KDNK). A compositionally biased stretch (basic and acidic residues) spans 31 to 53 (SKNKNESKEESSEEGVKENDNKL).

It localises to the cell membrane. This Bacillus subtilis (strain 168) protein is SPbeta prophage-derived uncharacterized lipoprotein YokB (yokB).